The primary structure comprises 158 residues: Protein Smg homolog (158 aa).

It belongs to the Smg family.

The protein is Protein Smg homolog of Shewanella oneidensis (strain ATCC 700550 / JCM 31522 / CIP 106686 / LMG 19005 / NCIMB 14063 / MR-1).